We begin with the raw amino-acid sequence, 131 residues long: Small ribosomal subunit protein uS11 (131 aa).

Residues 1–15 (MAAKTVKKTRRRKER) show a composition bias toward basic residues. The tract at residues 1–23 (MAAKTVKKTRRRKERKNVEHGAA) is disordered.

Belongs to the universal ribosomal protein uS11 family. Part of the 30S ribosomal subunit. Interacts with proteins S7 and S18. Binds to IF-3.

Its function is as follows. Located on the platform of the 30S subunit, it bridges several disparate RNA helices of the 16S rRNA. Forms part of the Shine-Dalgarno cleft in the 70S ribosome. The sequence is that of Small ribosomal subunit protein uS11 from Clostridium beijerinckii (strain ATCC 51743 / NCIMB 8052) (Clostridium acetobutylicum).